We begin with the raw amino-acid sequence, 264 residues long: Thiazole synthase (264 aa).

Lys-106 functions as the Schiff-base intermediate with DXP in the catalytic mechanism. 1-deoxy-D-xylulose 5-phosphate-binding positions include Gly-167, 193–194 (AG), and 215–216 (NS).

This sequence belongs to the ThiG family. As to quaternary structure, homotetramer. Forms heterodimers with either ThiH or ThiS.

The protein localises to the cytoplasm. It carries out the reaction [ThiS sulfur-carrier protein]-C-terminal-Gly-aminoethanethioate + 2-iminoacetate + 1-deoxy-D-xylulose 5-phosphate = [ThiS sulfur-carrier protein]-C-terminal Gly-Gly + 2-[(2R,5Z)-2-carboxy-4-methylthiazol-5(2H)-ylidene]ethyl phosphate + 2 H2O + H(+). Its pathway is cofactor biosynthesis; thiamine diphosphate biosynthesis. Its function is as follows. Catalyzes the rearrangement of 1-deoxy-D-xylulose 5-phosphate (DXP) to produce the thiazole phosphate moiety of thiamine. Sulfur is provided by the thiocarboxylate moiety of the carrier protein ThiS. In vitro, sulfur can be provided by H(2)S. In Pseudomonas fluorescens (strain SBW25), this protein is Thiazole synthase.